The chain runs to 111 residues: uncharacterized protein (111 aa).

A helical membrane pass occupies residues 27-47 (HLFHFPSISFFFFFFFFFFSF).

Its subcellular location is the membrane. This is an uncharacterized protein from Saccharomyces cerevisiae (strain ATCC 204508 / S288c) (Baker's yeast).